The primary structure comprises 123 residues: Cysteine proteinase inhibitor 8 (123 aa).

An N-terminal signal peptide occupies residues Met-1–Ala-19. A Cystatin domain is found at Gly-33–Asp-91. Residues Gln-76–Gly-80 carry the Secondary area of contact motif.

The protein belongs to the cystatin family. Phytocystatin subfamily.

It is found in the secreted. In terms of biological role, specific inhibitor of cysteine proteinases. Probably involved in the regulation of endogenous processes and in defense against pests and pathogens. The protein is Cysteine proteinase inhibitor 8 of Oryza sativa subsp. japonica (Rice).